Reading from the N-terminus, the 513-residue chain is Alpha,alpha-trehalose-phosphate synthase [UDP-forming] (513 aa).

Y40 bears the Phosphotyrosine mark. The D-glucose 6-phosphate site is built by Y104 and D158. UDP is bound by residues R294 and K299. UDP-alpha-D-glucose-binding residues include R294 and K299. Residue R332 participates in D-glucose 6-phosphate binding. A UDP-alpha-D-glucose-binding site is contributed by 393-401; it reads DGMNLVSYE. 397–401 lines the UDP pocket; the sequence is LVSYE. S503 is subject to Phosphoserine.

The protein belongs to the glycosyltransferase 20 family. As to quaternary structure, homomer. Component of the trehalose synthase complex that contains at least tps1, ntp1 and tpp1. Interacts with tpp1. Interacts with ntp1; the interaction is independent of stress conditions.

The protein localises to the cytoplasm. The protein resides in the nucleus. It catalyses the reaction D-glucose 6-phosphate + UDP-alpha-D-glucose = alpha,alpha-trehalose 6-phosphate + UDP + H(+). It participates in carbohydrate biosynthesis. Functionally, synthase catalytic subunit of the trehalose synthase complex that catalyzes the production of trehalose from glucose-6-phosphate and UDP-alpha-D-glucose in a two step process. The disaccharide trehalose serves as a storage carbohydrate that is mobilized during nutrient stress and spore germination. Together with ntp1, regulates the level of trehalose as a protectant for cell integrity during thermal and osmotic stress. The sequence is that of Alpha,alpha-trehalose-phosphate synthase [UDP-forming] from Schizosaccharomyces pombe (strain 972 / ATCC 24843) (Fission yeast).